Here is a 154-residue protein sequence, read N- to C-terminus: Crossover junction endodeoxyribonuclease RuvC (154 aa).

Active-site residues include D7, E67, and D139. Residues D7, E67, and D139 each coordinate Mg(2+).

The protein belongs to the RuvC family. In terms of assembly, homodimer which binds Holliday junction (HJ) DNA. The HJ becomes 2-fold symmetrical on binding to RuvC with unstacked arms; it has a different conformation from HJ DNA in complex with RuvA. In the full resolvosome a probable DNA-RuvA(4)-RuvB(12)-RuvC(2) complex forms which resolves the HJ. The cofactor is Mg(2+).

The protein localises to the cytoplasm. It carries out the reaction Endonucleolytic cleavage at a junction such as a reciprocal single-stranded crossover between two homologous DNA duplexes (Holliday junction).. Its function is as follows. The RuvA-RuvB-RuvC complex processes Holliday junction (HJ) DNA during genetic recombination and DNA repair. Endonuclease that resolves HJ intermediates. Cleaves cruciform DNA by making single-stranded nicks across the HJ at symmetrical positions within the homologous arms, yielding a 5'-phosphate and a 3'-hydroxyl group; requires a central core of homology in the junction. The consensus cleavage sequence is 5'-(A/T)TT(C/G)-3'. Cleavage occurs on the 3'-side of the TT dinucleotide at the point of strand exchange. HJ branch migration catalyzed by RuvA-RuvB allows RuvC to scan DNA until it finds its consensus sequence, where it cleaves and resolves the cruciform DNA. This is Crossover junction endodeoxyribonuclease RuvC from Prochlorococcus marinus (strain NATL1A).